A 149-amino-acid polypeptide reads, in one-letter code: MKVLLLEDVKNLGKAGEVCEVKDGYGNNFLIANKKAKLATNEVINKYKAEVKKKAETEALEKAQKLQMAETLQTVTLTIHKKVGANGSLFGAITKEEITERLKEHHANLNLDKKDIELKHPIKSTGIYEIEVKLGSGIVGVFKIDVVAE.

The protein belongs to the bacterial ribosomal protein bL9 family.

Its function is as follows. Binds to the 23S rRNA. The sequence is that of Large ribosomal subunit protein bL9 from Helicobacter acinonychis (strain Sheeba).